Here is a 90-residue protein sequence, read N- to C-terminus: MATSAAVRDDEPATKFAKDQLKSIIERIERLEEEKKAISDDIRDVYAESKGNGYDVKALRTIVRMRKQDPNERAEAETILETYMQALGMI.

The protein belongs to the UPF0335 family.

The sequence is that of UPF0335 protein bsl7135 from Bradyrhizobium diazoefficiens (strain JCM 10833 / BCRC 13528 / IAM 13628 / NBRC 14792 / USDA 110).